The primary structure comprises 301 residues: Homoserine O-acetyltransferase (301 aa).

C142 acts as the Acyl-thioester intermediate in catalysis. Substrate contacts are provided by K163 and S192. Residue H235 is the Proton acceptor of the active site. The active site involves E237. Position 249 (R249) interacts with substrate.

This sequence belongs to the MetA family.

Its subcellular location is the cytoplasm. It carries out the reaction L-homoserine + acetyl-CoA = O-acetyl-L-homoserine + CoA. Its pathway is amino-acid biosynthesis; L-methionine biosynthesis via de novo pathway; O-acetyl-L-homoserine from L-homoserine: step 1/1. In terms of biological role, transfers an acetyl group from acetyl-CoA to L-homoserine, forming acetyl-L-homoserine. The chain is Homoserine O-acetyltransferase from Bacillus mycoides (strain KBAB4) (Bacillus weihenstephanensis).